Consider the following 263-residue polypeptide: MAVLSLAQMLEAGVHFGHQARRWNPRMAPYIFTVRNGVHIIDLVQTAQLVEEAYNYIRNAAEKGKRFLFIGTKRQAAGIVEQEALRCGSYYVNQRWLGGMLTNWTTIKTRVDRLKELESMEESGLIDLRPKQEASALRRELARLQKYLGGIKQMRRLPDIAIIVDVKREYNAVAECHKLGIPIVALLDTNCDPTQVDIPIPANDDAIRSIKLIVGKLADAIYEGRHGQLEEPEADLADEDDNGMTTSDDGDAEALDIPDDSDA.

The tract at residues 228-263 (QLEEPEADLADEDDNGMTTSDDGDAEALDIPDDSDA) is disordered. Acidic residues predominate over residues 230–263 (EEPEADLADEDDNGMTTSDDGDAEALDIPDDSDA).

The protein belongs to the universal ribosomal protein uS2 family.

The sequence is that of Small ribosomal subunit protein uS2 from Thermosynechococcus vestitus (strain NIES-2133 / IAM M-273 / BP-1).